Here is a 128-residue protein sequence, read N- to C-terminus: Large ribosomal subunit protein uL22 (128 aa).

The protein belongs to the universal ribosomal protein uL22 family. In terms of assembly, part of the 50S ribosomal subunit.

In terms of biological role, this protein binds specifically to 23S rRNA; its binding is stimulated by other ribosomal proteins, e.g. L4, L17, and L20. It is important during the early stages of 50S assembly. It makes multiple contacts with different domains of the 23S rRNA in the assembled 50S subunit and ribosome. Functionally, the globular domain of the protein is located near the polypeptide exit tunnel on the outside of the subunit, while an extended beta-hairpin is found that lines the wall of the exit tunnel in the center of the 70S ribosome. In Rhodopseudomonas palustris (strain HaA2), this protein is Large ribosomal subunit protein uL22.